The primary structure comprises 224 residues: Ras-related protein RABA4b (224 aa).

Position 2 is an N-acetylalanine (Ala-2). 24–31 (GDSAVGKS) is a binding site for GTP. An Effector region motif is present at residues 46–54 (SKATIGVEF). GTP is bound by residues 72–76 (DTAGQ), 130–133 (NKSD), and 160–161 (SA). S-geranylgeranyl cysteine attachment occurs at residues Cys-220 and Cys-221.

It belongs to the small GTPase superfamily. Rab family. As to quaternary structure, interacts with TCTP1. In terms of tissue distribution, expressed in roots, stems, leaves and flowers. Expressed in tips of growing root hair cells.

Its subcellular location is the early endosome membrane. It localises to the golgi apparatus. The protein resides in the trans-Golgi network membrane. Functionally, regulator of membrane trafficking. May be required for secretion of cell wall components in cells. In Arabidopsis thaliana (Mouse-ear cress), this protein is Ras-related protein RABA4b.